Consider the following 303-residue polypeptide: Aspartate carbamoyltransferase catalytic subunit (303 aa).

Residues Arg49 and Thr50 each contribute to the carbamoyl phosphate site. Residue Lys77 participates in L-aspartate binding. 3 residues coordinate carbamoyl phosphate: Arg99, His126, and Gln129. L-aspartate contacts are provided by Arg159 and Arg211. Carbamoyl phosphate is bound by residues Ser252 and Pro253.

It belongs to the aspartate/ornithine carbamoyltransferase superfamily. ATCase family. In terms of assembly, heterododecamer (2C3:3R2) of six catalytic PyrB chains organized as two trimers (C3), and six regulatory PyrI chains organized as three dimers (R2).

The catalysed reaction is carbamoyl phosphate + L-aspartate = N-carbamoyl-L-aspartate + phosphate + H(+). The protein operates within pyrimidine metabolism; UMP biosynthesis via de novo pathway; (S)-dihydroorotate from bicarbonate: step 2/3. Its function is as follows. Catalyzes the condensation of carbamoyl phosphate and aspartate to form carbamoyl aspartate and inorganic phosphate, the committed step in the de novo pyrimidine nucleotide biosynthesis pathway. The polypeptide is Aspartate carbamoyltransferase catalytic subunit (Listeria monocytogenes serotype 4b (strain F2365)).